We begin with the raw amino-acid sequence, 253 residues long: Putative tyrosine-protein phosphatase OCA1 (253 aa).

Over residues 1–21 the composition is skewed to basic and acidic residues; the sequence is MHRTSIVEELERHQQDQKADQ. Residues 1-84 form a disordered region; sequence MHRTSIVEEL…PRMKTIVKPP (84 aa). Residues 27–65 are compositionally biased toward polar residues; the sequence is SDASNSALQESSDPRLSTTDNTNTPEINVNDQQQEQQVA. Residues 93-249 enclose the Tyrosine-protein phosphatase domain; the sequence is NFGPVERNLY…IIVYPESAPE (157 aa). The active-site Phosphocysteine intermediate is Cys-186.

The protein belongs to the protein-tyrosine phosphatase family.

It is found in the cytoplasm. It catalyses the reaction O-phospho-L-tyrosyl-[protein] + H2O = L-tyrosyl-[protein] + phosphate. Putative tyrosine-protein phosphatase required for protection against superoxide stress. This is Putative tyrosine-protein phosphatase OCA1 (OCA1) from Yarrowia lipolytica (strain CLIB 122 / E 150) (Yeast).